The primary structure comprises 315 residues: tRNA dimethylallyltransferase (315 aa).

10 to 17 contributes to the ATP binding site; the sequence is GPTGVGKT. Residue 12-17 coordinates substrate; the sequence is TGVGKT. An interaction with substrate tRNA region spans residues 35–38; sequence DSMQ.

Belongs to the IPP transferase family. Monomer. Mg(2+) is required as a cofactor.

The catalysed reaction is adenosine(37) in tRNA + dimethylallyl diphosphate = N(6)-dimethylallyladenosine(37) in tRNA + diphosphate. In terms of biological role, catalyzes the transfer of a dimethylallyl group onto the adenine at position 37 in tRNAs that read codons beginning with uridine, leading to the formation of N6-(dimethylallyl)adenosine (i(6)A). This Thermodesulfovibrio yellowstonii (strain ATCC 51303 / DSM 11347 / YP87) protein is tRNA dimethylallyltransferase.